A 240-amino-acid polypeptide reads, in one-letter code: Probable Ni/Fe-hydrogenase B-type cytochrome subunit (240 aa).

Transmembrane regions (helical) follow at residues 31 to 51, 75 to 95, 142 to 163, and 196 to 213; these read LWHW…YFIG, FAAG…AFVG, LAMF…FALY, and LGMW…YLAV.

The protein belongs to the HupC/HyaC/HydC family.

The protein localises to the cell membrane. In terms of biological role, probable b-type cytochrome. The protein is Probable Ni/Fe-hydrogenase B-type cytochrome subunit (hoxZ) of Azotobacter vinelandii.